The chain runs to 200 residues: Arylesterase (200 aa).

Residues 1–19 (MIRLLSLVLFFCLSAASQA) form the signal peptide. Ser-29 serves as the catalytic Nucleophile. Active-site residues include Asp-176 and His-179.

The protein belongs to the 'GDSL' lipolytic enzyme family. As to quaternary structure, homodimer.

It carries out the reaction a phenyl acetate + H2O = a phenol + acetate + H(+). Favors the hydrolysis of several arylesters. This chain is Arylesterase, found in Vibrio mimicus.